Consider the following 861-residue polypeptide: Ribosome biogenesis protein BOP1 homolog (861 aa).

Residues M1–R237 are disordered. Residues N29–S45 are compositionally biased toward polar residues. Acidic residues-rich tracts occupy residues D62–D77 and S87–A143. 3 stretches are compositionally biased toward basic and acidic residues: residues E144 to K156, E174 to A190, and P212 to D223. WD repeat units lie at residues G522–T561, P563–S603, K692–K730, P733–Q772, L776–Q815, and V831–T861.

Belongs to the WD repeat BOP1/ERB1 family.

Its subcellular location is the nucleus. The protein localises to the nucleolus. It is found in the nucleoplasm. In terms of biological role, required for maturation of ribosomal RNAs and formation of the large ribosomal subunit. This chain is Ribosome biogenesis protein BOP1 homolog, found in Culex quinquefasciatus (Southern house mosquito).